The primary structure comprises 422 residues: Adenylosuccinate synthetase (422 aa).

Residues G11 to K17 and G39 to T41 contribute to the GTP site. D12 serves as the catalytic Proton acceptor. D12 and G39 together coordinate Mg(2+). Residues D12–K15, N37–H40, T129, R143, N219, T234, and R298 contribute to the IMP site. The active-site Proton donor is the H40. Residue V294–R300 coordinates substrate. GTP-binding positions include R300, K326–D328, and G409–G411.

It belongs to the adenylosuccinate synthetase family. As to quaternary structure, homodimer. Mg(2+) is required as a cofactor.

It localises to the cytoplasm. It carries out the reaction IMP + L-aspartate + GTP = N(6)-(1,2-dicarboxyethyl)-AMP + GDP + phosphate + 2 H(+). It participates in purine metabolism; AMP biosynthesis via de novo pathway; AMP from IMP: step 1/2. Plays an important role in the de novo pathway and in the salvage pathway of purine nucleotide biosynthesis. Catalyzes the first committed step in the biosynthesis of AMP from IMP. This chain is Adenylosuccinate synthetase, found in Blastomyces gilchristii (strain SLH14081) (Blastomyces dermatitidis).